The chain runs to 370 residues: Neutral protease 2 homolog AFUA_4G13750 (370 aa).

The first 19 residues, M1–A19, serve as a signal peptide directing secretion. The propeptide occupies L20–R172. Cystine bridges form between C178/C250 and C257/C275. H300 is a Zn(2+) binding site. Residue E301 is part of the active site. Zn(2+) is bound by residues H304 and D315.

The protein belongs to the peptidase M35 family. The cofactor is Zn(2+).

The protein resides in the secreted. The enzyme catalyses Preferential cleavage of bonds with hydrophobic residues in P1'. Also 3-Asn-|-Gln-4 and 8-Gly-|-Ser-9 bonds in insulin B chain.. Its function is as follows. Secreted metalloproteinase that allows assimilation of proteinaceous substrates. Shows high activities on basic nuclear substrates such as histone and protamine. May be involved in virulence. This chain is Neutral protease 2 homolog AFUA_4G13750, found in Aspergillus fumigatus (strain ATCC MYA-4609 / CBS 101355 / FGSC A1100 / Af293) (Neosartorya fumigata).